The following is a 118-amino-acid chain: Protein TusC (118 aa).

Belongs to the DsrF/TusC family. Heterohexamer, formed by a dimer of trimers. The hexameric TusBCD complex contains 2 copies each of TusB, TusC and TusD. The TusBCD complex interacts with TusE.

It is found in the cytoplasm. Its function is as follows. Part of a sulfur-relay system required for 2-thiolation of 5-methylaminomethyl-2-thiouridine (mnm(5)s(2)U) at tRNA wobble positions. This is Protein TusC from Salmonella agona (strain SL483).